The primary structure comprises 375 residues: S-(hydroxymethyl)glutathione dehydrogenase (375 aa).

C40 is a binding site for Zn(2+). H41 contacts NAD(+). Residues H62, E63, C92, C95, C98, C106, and C170 each coordinate Zn(2+). NAD(+) contacts are provided by residues 195–200 (GLGGIG), D219, 293–295 (IGV), and 318–320 (TAF).

This sequence belongs to the zinc-containing alcohol dehydrogenase family. Class-III subfamily. Homotetramer. Requires Zn(2+) as cofactor.

The catalysed reaction is a primary alcohol + NAD(+) = an aldehyde + NADH + H(+). The enzyme catalyses a secondary alcohol + NAD(+) = a ketone + NADH + H(+). It catalyses the reaction S-(hydroxymethyl)glutathione + NADP(+) = S-formylglutathione + NADPH + H(+). It carries out the reaction S-(hydroxymethyl)glutathione + NAD(+) = S-formylglutathione + NADH + H(+). The catalysed reaction is S-nitrosoglutathione + NADH + H(+) = S-(hydroxysulfenamide)glutathione + NAD(+). Functionally, oxidizes long-chain alcohols and, in the presence of glutathione, is able to oxidize formaldehyde. Also acts as a S-nitroso-glutathione reductase by catalyzing the NADH-dependent reduction of S-nitrosoglutathione, thereby regulating protein S-nitrosylation. In Paracoccus denitrificans, this protein is S-(hydroxymethyl)glutathione dehydrogenase (flhA).